Here is a 708-residue protein sequence, read N- to C-terminus: MAETLEFNDIFQEVKGSMNDGRLRLSRQGIIFKNSKTGKVDNIQAGELTEGIWRRVALGHGLKLLTKNGHVYKYDGFRESEFEKLSDFFKTHYRLELMEKDLCVKGWNWGTVKFGGQLLSFDIGDQPVFEIPLSNVSQCTTGKNEVTLEFHQNDDAEVSLMEVRFYVPPTQEDGVDPVEAFAQNVLSKADVIQATGDAICIFRELQCLTPRGRYDIRIYPTFLHLHGKTFDYKIPYTTVLRLFLLPHKDQRQMFFVISLDPPIKQGQTRYHFLILLFSKDEDISLTLNMNEEEVEKRFEGRLTKNMSGSLYEMVSRVMKALVNRKITVPGNFQGHSGAQCITCSYKASSGLLYPLERGFIYVHKPPVHIRFDEISFVNFARGTTTTRSFDFEIETKQGTQYTFSSIEREEYGKLFDFVNAKKLNIKNRGLKEGINPGYDDYADSDEDQHDAYLERMKEEGKIREENANDSSDDSGEETDESFNPGEEEEDVAEEFDSNASASSSSNEGDSDREEKKREQLKRAKMAKDRKSRRKSSEAKKGKDPNAPKRPMSAYMLWLNASREKIKSDHPGISITDLSKKAGEIWKGMSKEKKEEWDRKAEDARREYEKAMKEYEGGRGDSSKRDKSKKKKKVKAKMEKKSTPSRGSSSKSSSRQLSDSFKSKEFVSSDESSSGENKSKKKRRRSEDSEEELASTPPSSEDSASGSDE.

Alanine 2 carries the N-acetylalanine modification. A Glycyl lysine isopeptide (Lys-Gly) (interchain with G-Cter in SUMO2) cross-link involves residue lysine 90. At threonine 170 the chain carries Phosphothreonine. Lysine 233 bears the N6-acetyllysine mark. Residues lysine 296 and lysine 364 each participate in a glycyl lysine isopeptide (Lys-Gly) (interchain with G-Cter in SUMO2) cross-link. Lysine 413 carries the N6-acetyllysine modification. Tyrosine 441 is modified (phosphotyrosine). Position 444 is a phosphoserine (serine 444). Residue tyrosine 452 is modified to Phosphotyrosine. A disordered region spans residues glutamate 458–glutamate 708. Acidic residues predominate over residues serine 470–aspartate 496. Serine 471 bears the Phosphoserine mark. Low complexity predominate over residues serine 497 to glutamate 507. Phosphoserine; by CK2 is present on serine 510. Composition is skewed to basic and acidic residues over residues arginine 512–alanine 546 and leucine 577–arginine 624. Lysine 542 carries the N6-acetyllysine modification. The HMG box DNA-binding region spans proline 547–glutamate 615. Residues aspartate 625–lysine 634 show a composition bias toward basic residues. Residues proline 643–serine 659 are compositionally biased toward low complexity. Serine 657 is modified (phosphoserine; by CK2). Phosphoserine occurs at positions 659, 667, 668, 671, 672, and 673. Residue serine 688 is modified to Phosphoserine; by CK2. Residues threonine 695 to glutamate 708 are compositionally biased toward polar residues.

Belongs to the SSRP1 family. As to quaternary structure, interacts with MYOG (via C-terminal region). Component of the FACT complex, a stable heterodimer of SSRP1 and SUPT16H. Also a component of a CK2-SPT16-SSRP1 complex which forms following UV irradiation, composed of SSRP1, SUPT16H, CSNK2A1, CSNK2A2 and CSNK2B. Binds to histone H3-H4 tetramers, but not to intact nucleosomes. Identified in a centromere complex containing histones H2A, H2B and H4, and at least CENPA, CENPB, CENPC, CENPT, CENPN, HJURP, SUPT16H, SSRP1 and RSF1. Interacts with isoform gamma of TP63. Interacts with FYTTD1/UIF. Interacts with SRF. Interacts with NEK9. Phosphorylated by CK2 following UV but not gamma irradiation. Phosphorylation inhibits its DNA-binding activity. Post-translationally, ubiquitinated. Polyubiquitinated following caspase cleavage resulting in degradation of the N-terminal ubiquitinated part of the cleaved protein. In terms of processing, sumoylated.

Its subcellular location is the nucleus. The protein localises to the chromosome. It localises to the nucleolus. Functionally, component of the FACT complex, a general chromatin factor that acts to reorganize nucleosomes. The FACT complex is involved in multiple processes that require DNA as a template such as mRNA elongation, DNA replication and DNA repair. During transcription elongation the FACT complex acts as a histone chaperone that both destabilizes and restores nucleosomal structure. It facilitates the passage of RNA polymerase II and transcription by promoting the dissociation of one histone H2A-H2B dimer from the nucleosome, then subsequently promotes the reestablishment of the nucleosome following the passage of RNA polymerase II. The FACT complex is probably also involved in phosphorylation of 'Ser-392' of p53/TP53 via its association with CK2 (casein kinase II). Binds specifically to double-stranded DNA. Also acts as a transcriptional coactivator for p63/TP63. The chain is FACT complex subunit SSRP1 (Ssrp1) from Mus musculus (Mouse).